The sequence spans 438 residues: CBL-interacting protein kinase 32 (438 aa).

The Protein kinase domain maps to 13 to 268; sequence YELGRTIGEG…IPEILEDEWF (256 aa). ATP is bound by residues 19-27 and K42; that span reads IGEGTFAKV. D136 functions as the Proton acceptor in the catalytic mechanism. Residues 154 to 183 are activation loop; sequence DFGLSALSQQIKDDGLLHTTCGTPNYVAPE. The region spanning 305 to 329 is the NAF domain; sequence EEPEALNAFELISMSAGLNLGNLFD. Positions 335–364 are PPI; it reads KRETRFTSKCPPKEIVRKIEEAAKPLGFDV.

It belongs to the protein kinase superfamily. CAMK Ser/Thr protein kinase family. SNF1 subfamily. Requires Mn(2+) as cofactor.

It carries out the reaction L-seryl-[protein] + ATP = O-phospho-L-seryl-[protein] + ADP + H(+). The catalysed reaction is L-threonyl-[protein] + ATP = O-phospho-L-threonyl-[protein] + ADP + H(+). Functionally, CIPK serine-threonine protein kinases interact with CBL proteins. Binding of a CBL protein to the regulatory NAF domain of CIPK protein lead to the activation of the kinase in a calcium-dependent manner. The sequence is that of CBL-interacting protein kinase 32 (CIPK32) from Oryza sativa subsp. japonica (Rice).